The primary structure comprises 417 residues: MLEQMGIAAKQASYKLAQLSSREKNRVLEKIADELEAQSEIILNANAQDVADARANGLSEAMLDRLALTPARLKGIADDVRQVCNLADPVGQVIDGGVLDSGLRLERRRVPLGVIGVIYEARPNVTVDVASLCLKTGNAVILRGGKETCRTNAATVAVIQDALKSCGLPAGAVQAIDNPDRALVSEMLRMDKYIDMLIPRGGAGLHKLCREQSTIPVITGGIGVCHIYVDESAEIAEALKVIVNAKTQRPSTCNTVETLLVNKNIADSFLPALSKQMAESGVTLHADAGALAQLQTGPAKVVAVKAEEYDDEFLSLDLNVKIVSDLDDAIAHIREHGTQHSDAILTRDMRNAQRFVNEVDSSAVYVNASTRFTDGGQFGLGAEVAVSTQKLHARGPMGLEALTTYKWIGIGDYTIRA.

This sequence belongs to the gamma-glutamyl phosphate reductase family.

The protein localises to the cytoplasm. The enzyme catalyses L-glutamate 5-semialdehyde + phosphate + NADP(+) = L-glutamyl 5-phosphate + NADPH + H(+). It functions in the pathway amino-acid biosynthesis; L-proline biosynthesis; L-glutamate 5-semialdehyde from L-glutamate: step 2/2. Catalyzes the NADPH-dependent reduction of L-glutamate 5-phosphate into L-glutamate 5-semialdehyde and phosphate. The product spontaneously undergoes cyclization to form 1-pyrroline-5-carboxylate. The protein is Gamma-glutamyl phosphate reductase of Escherichia coli O17:K52:H18 (strain UMN026 / ExPEC).